The sequence spans 299 residues: Oxygen-dependent coproporphyrinogen-III oxidase (299 aa).

A substrate-binding site is contributed by Ser92. A divalent metal cation-binding residues include His96 and His106. His106 (proton donor) is an active-site residue. 108-110 (NVR) provides a ligand contact to substrate. A divalent metal cation is bound by residues His145 and His175. The important for dimerization stretch occupies residues 240-275 (YVEFNLVWDRGTLFGLQTGGRTESILMSMPPLVRWE). Residue 258-260 (GGR) coordinates substrate.

This sequence belongs to the aerobic coproporphyrinogen-III oxidase family. Homodimer. The cofactor is a divalent metal cation.

The protein localises to the cytoplasm. It catalyses the reaction coproporphyrinogen III + O2 + 2 H(+) = protoporphyrinogen IX + 2 CO2 + 2 H2O. The protein operates within porphyrin-containing compound metabolism; protoporphyrin-IX biosynthesis; protoporphyrinogen-IX from coproporphyrinogen-III (O2 route): step 1/1. Its function is as follows. Involved in the heme biosynthesis. Catalyzes the aerobic oxidative decarboxylation of propionate groups of rings A and B of coproporphyrinogen-III to yield the vinyl groups in protoporphyrinogen-IX. This is Oxygen-dependent coproporphyrinogen-III oxidase from Salmonella enteritidis PT4 (strain P125109).